The primary structure comprises 652 residues: Protein high chlorophyll fluorescent 107 (652 aa).

2 disordered regions span residues 1–21 (MHFF…NTSS) and 78–121 (VFSP…EGKK). Residues 1-68 (MHFFFVPNSS…TFSSKNTYLY (68 aa)) constitute a chloroplast transit peptide. Over residues 105–121 (PLLENSDKESSEEEGKK) the composition is skewed to basic and acidic residues. TPR repeat units follow at residues 168-201 (LDLS…WPED), 202-235 (GRPY…TQGE), 237-270 (SYIW…DKKH), 271-304 (VAAW…CGRN), 305-338 (EYIY…NSRS), 339-372 (CASW…SPKN), 374-406 (FAWH…NPRD), 407-440 (PVLL…DPRH), 441-474 (QPVW…DANT), 478-511 (SRCL…NSQS), 543-576 (TEVV…GQNN), and 598-631 (QQPE…DPLK). A disordered region spans residues 585-610 (LRNMNRTKDSQSNQQPESSAGREDIE).

May form homomultimers. Part of a multi-subunit complex in the range of 60-190 and 600-800 kDa in chloroplast membranes.

Its subcellular location is the plastid. The protein localises to the chloroplast. It is found in the chloroplast membrane. It localises to the chloroplast stroma. Involved, directly or indirectly, in the processing of chloroplast encoded mRNAs. Exhibits sequence-specific RNA binding and RNA remodeling activities, probably leading to the activation of translation of the target gene cluster psbB-psbT-psbH-petB-petD. Blocks 5'-3' and 3'-5' exoribonucleases (e.g. polynucleotide phosphorylase (PNPase), RNase R) in vitro. Necessary for intercistronic RNA processing of the psbH 5' untranslated region or the stabilization of 5' processed psbH RNAs. Also required for the synthesis of psbB. The sequence is that of Protein high chlorophyll fluorescent 107 from Arabidopsis thaliana (Mouse-ear cress).